The primary structure comprises 205 residues: Probable GTP-binding protein EngB (205 aa).

The 175-residue stretch at 27–201 (TGIEIAFAGR…AAKLDFWFSP (175 aa)) folds into the EngB-type G domain. Residues 35-42 (GRSNAGKS), 62-66 (GRTQL), 80-83 (DLPG), 147-150 (TKAD), and 180-182 (FSA) each bind GTP. Mg(2+)-binding residues include Ser42 and Thr64.

The protein belongs to the TRAFAC class TrmE-Era-EngA-EngB-Septin-like GTPase superfamily. EngB GTPase family. Mg(2+) is required as a cofactor.

In terms of biological role, necessary for normal cell division and for the maintenance of normal septation. The sequence is that of Probable GTP-binding protein EngB from Haemophilus influenzae (strain 86-028NP).